We begin with the raw amino-acid sequence, 486 residues long: Palmitoyltransferase pfa5 (486 aa).

The next 2 helical transmembrane spans lie at 12-32 (AVAR…CYVI) and 54-74 (VGAG…VIIT). The tract at residues 94 to 130 (AADQQSTPAKRSKSRSRRKGHGHGHRKSKSDEVSDKP) is disordered. The span at 103 to 121 (KRSKSRSRRKGHGHGHRKS) shows a compositional bias: basic residues. A DHHC domain is found at 172 to 222 (IYCSKCCHYKPDRTHHCREVDRCVRKMDHFCPWVGGVVSETSFKFFIQFVF). A run of 2 helical transmembrane segments spans residues 217–237 (FIQF…VCAI) and 261–281 (LVML…FNLT). Disordered regions lie at residues 326 to 357 (PVPP…STDP) and 433 to 486 (KDAA…TGTT). Residues 447–456 (SSYNSSPSAP) are compositionally biased toward low complexity. Positions 460-480 (RSKRKQKRGKHHHHHHHHRHS) are enriched in basic residues.

Belongs to the DHHC palmitoyltransferase family. PFA5 subfamily. Post-translationally, autopalmitoylated.

It localises to the membrane. It catalyses the reaction L-cysteinyl-[protein] + hexadecanoyl-CoA = S-hexadecanoyl-L-cysteinyl-[protein] + CoA. The protein is Palmitoyltransferase pfa5 (pfa5) of Emericella nidulans (strain FGSC A4 / ATCC 38163 / CBS 112.46 / NRRL 194 / M139) (Aspergillus nidulans).